A 428-amino-acid chain; its full sequence is tRNA(Ile)-lysidine synthase (428 aa).

28-33 (SGGVDS) serves as a coordination point for ATP.

Belongs to the tRNA(Ile)-lysidine synthase family.

It is found in the cytoplasm. It carries out the reaction cytidine(34) in tRNA(Ile2) + L-lysine + ATP = lysidine(34) in tRNA(Ile2) + AMP + diphosphate + H(+). Ligates lysine onto the cytidine present at position 34 of the AUA codon-specific tRNA(Ile) that contains the anticodon CAU, in an ATP-dependent manner. Cytidine is converted to lysidine, thus changing the amino acid specificity of the tRNA from methionine to isoleucine. The sequence is that of tRNA(Ile)-lysidine synthase from Streptococcus pyogenes serotype M6 (strain ATCC BAA-946 / MGAS10394).